The following is an 825-amino-acid chain: Heterogeneous nuclear ribonucleoprotein U (825 aa).

Position 2 is an N-acetylserine; partial (Ser2). A Phosphoserine modification is found at Ser4. In terms of domain architecture, SAP spans 8–42 (VKKLKVSELKEELKKRRLSDKGLKAELMERLQAAL). N6-acetyllysine is present on residues Lys17 and Lys21. The interval 41–281 (ALDDEEAGGR…PQPPVEEEDE (241 aa)) is disordered. Phosphoserine; by PLK1 is present on Ser59. Ser66 carries the post-translational modification Phosphoserine. Residues 72–81 (AGLEQEAAAG) are compositionally biased toward low complexity. 3 stretches are compositionally biased toward acidic residues: residues 82-95 (GDEEEEEEEEEEEG), 120-134 (PMEEEEAASEDENGD), and 140-153 (EGEDELGDEEEGAG). Residues 159-178 (GEQQPQPPATQQQQPQQQRG) are compositionally biased toward low complexity. Lys186 bears the N6-acetyllysine mark. Position 187 is an ADP-ribosylserine (Ser187). Positions 199–211 (APPGARQGQQQAG) are enriched in low complexity. Residue Lys215 is modified to N6-acetyllysine. The span at 233-266 (GKTEQKGGDKKRGVKRPREDHGRGYFEYIEENKY) shows a compositional bias: basic and acidic residues. Arg255 carries the post-translational modification Citrulline. Lys265 is modified (N6-acetyllysine; alternate). Lys265 participates in a covalent cross-link: Glycyl lysine isopeptide (Lys-Gly) (interchain with G-Cter in SUMO1); alternate. Lys265 participates in a covalent cross-link: Glycyl lysine isopeptide (Lys-Gly) (interchain with G-Cter in SUMO2); alternate. Tyr266 is modified (phosphotyrosine). Ser267 and Ser271 each carry phosphoserine. Positions 267–464 (SRAKSPQPPV…VEFNFGQKEK (198 aa)) constitute a B30.2/SPRY domain. Position 286 is a phosphothreonine (Thr286). Lys352 bears the N6-acetyllysine mark. Residues 488-672 (PKGPEEKKDC…QKLLEQYKEE (185 aa)) form an ATPase domain region. Lys495 is covalently cross-linked (Glycyl lysine isopeptide (Lys-Gly) (interchain with G-Cter in SUMO2)). Residue 504-511 (GLPGAGKT) coordinates ATP. N6-acetyllysine; alternate occurs at positions 516 and 524. Residues Lys516 and Lys524 each participate in a glycyl lysine isopeptide (Lys-Gly) (interchain with G-Cter in SUMO2); alternate cross-link. Thr532 is subject to Phosphothreonine. Lys536 is covalently cross-linked (Glycyl lysine isopeptide (Lys-Gly) (interchain with G-Cter in SUMO2)). The residue at position 551 (Lys551) is an N6-acetyllysine. At Lys565 the chain carries N6-acetyllysine; alternate. Lys565 is covalently cross-linked (Glycyl lysine isopeptide (Lys-Gly) (interchain with G-Cter in SUMO2); alternate). A Glycyl lysine isopeptide (Lys-Gly) (interchain with G-Cter in SUMO2) cross-link involves residue Lys574. A Phosphothreonine modification is found at Thr582. Glycyl lysine isopeptide (Lys-Gly) (interchain with G-Cter in SUMO2) cross-links involve residues Lys609 and Lys626. An actin-binding region spans residues 611 to 626 (EDYKQRTQKKAEVEGK). The residue at position 635 (Lys635) is an N6-acetyllysine; alternate. Lys635 is covalently cross-linked (Glycyl lysine isopeptide (Lys-Gly) (interchain with G-Cter in SUMO2); alternate). Residues Lys664 and Lys670 each participate in a glycyl lysine isopeptide (Lys-Gly) (interchain with G-Cter in SUMO2) cross-link. Basic and acidic residues predominate over residues 671-683 (EESKKALPPEKKQ). Residues 671–749 (EESKKALPPE…GGGGGGSGGI (79 aa)) form a disordered region. An Omega-N-methylarginine modification is found at Arg702. Gly residues predominate over residues 710–728 (GGFNMRGGNFRGGAPGNRG). Residues 714–739 (MRGGNFRGGAPGNRGGYNRRGNMPQR) are RNA-binding RGG-box. Arg715, Arg720, and Arg727 each carry asymmetric dimethylarginine. Residues Arg733 and Arg739 each carry the asymmetric dimethylarginine; alternate modification. Omega-N-methylarginine; alternate occurs at positions 733 and 739. Arg739 carries the post-translational modification Dimethylated arginine; in A2780 ovarian carcinoma cell line. Over residues 739 to 749 (RGGGGGGSGGI) the composition is skewed to gly residues. Asymmetric dimethylarginine is present on residues Arg755 and Arg762. Residues 769–799 (GNYNRGGMPNRGNYNQNFRGRGNNRGYKNQS) are disordered. Residues 778–799 (NRGNYNQNFRGRGNNRGYKNQS) show a composition bias toward low complexity. The residue at position 814 (Lys814) is an N6-acetyllysine; alternate. A Glycyl lysine isopeptide (Lys-Gly) (interchain with G-Cter in SUMO2); alternate cross-link involves residue Lys814.

As to quaternary structure, oligomer (via ATPase domain and RNA-binding RGG-box region); oligomerization occurs upon ATP-binding in a chromatin-associated RNAs (caRNAs)- and transcription-dependent manner and is required for chromatin decompaction. ATP hydrolysis is required to cycle from an oligomeric to monomeric state to compact chromatin. Component of the coding region determinant (CRD)-mediated complex, composed of DHX9, HNRNPU, IGF2BP1, SYNCRIP and YBX1. Identified in the spliceosome C complex. Identified in a IGF2BP1-dependent mRNP granule complex containing untranslated mRNAs. Associates with heterogeneous nuclear ribonucleoprotein (hnRNP) particles. Associates (via middle region) with the C-terminal domain (CTD) RNA polymerase II (Pol II) holoenzyme; this association occurs in a RNA-independent manner. Associates (via middle region) with the core-TFIIH basal transcription factor complex; this association inhibits the CTD phosphorylation of RNA polymerase II holoenzyme by down-regulating TFIIH kinase activity. Associates with the telomerase holoenzyme complex. Associates with spindle microtubules (MTs) in a TPX2-dependent manner. Interacts (via C-terminus) with actin; this interaction is direct and mediates association with the phosphorylated CTD of RNA polymerase II and is disrupted in presence of the long non-coding H19 RNA. Interacts with AURKA. Interacts (via C-terminus) with CBX5; this interaction is, at least in part, RNA-dependent. Interacts with CR2. Interacts with CRY1. Interacts (via C-terminus) with EP300; this interaction enhances DNA-binding to nuclear scaffold/matrix attachment region (S/MAR) elements. Interacts with ERBB4. Interacts with GEMIN5. Interacts with IGF2BP1. Interacts with IGF2BP2 and IGF2BP3. Interacts with NCL; this interaction occurs during mitosis. Interacts (via C-terminus) with NR3C1 (via C-terminus). Interacts with PLK1; this interaction induces phosphorylation of HNRNPU at Ser-59 in mitosis. Interacts with POU3F4. Interacts with SMARCA4; this interaction occurs in embryonic stem cells and stimulates global Pol II-mediated transcription. Interacts (via C-terminus) with TOP2A; this interaction protects the topoisomerase TOP2A from degradation and positively regulates the relaxation of supercoiled DNA by TOP2A in a RNA-dependent manner. Interacts with TPX2; this interaction recruits HNRNPU to spindle microtubules (MTs). Interacts with UBQLN2. Interacts (via RNA-binding RGG-box region) with ZBTB7B; the interaction facilitates the recruitment of long non-coding RNA Blnc1 by ZBTB7B. Interacts with ERCC6. (Microbial infection) Interacts with HIV-1 protein Rev. In terms of processing, cleaved at Asp-100 by CASP3 during T-cell apoptosis, resulting in a loss of DNA- and chromatin-binding activities. Post-translationally, extensively phosphorylated. Phosphorylated on Ser-59 by PLK1 and dephosphorylated by protein phosphatase 2A (PP2A) in mitosis. Arg-739 is dimethylated, probably to asymmetric dimethylarginine. Arg-733 is dimethylated, probably to asymmetric dimethylarginine. In terms of processing, citrullinated by PADI4. In terms of tissue distribution, widely expressed.

It is found in the nucleus. It localises to the nucleus matrix. The protein resides in the chromosome. The protein localises to the nucleus speckle. Its subcellular location is the cytoplasm. It is found in the cytoskeleton. It localises to the microtubule organizing center. The protein resides in the centrosome. The protein localises to the centromere. Its subcellular location is the kinetochore. It is found in the spindle. It localises to the spindle pole. The protein resides in the midbody. The protein localises to the cell surface. Its subcellular location is the cytoplasmic granule. In terms of biological role, DNA- and RNA-binding protein involved in several cellular processes such as nuclear chromatin organization, telomere-length regulation, transcription, mRNA alternative splicing and stability, Xist-mediated transcriptional silencing and mitotic cell progression. Plays a role in the regulation of interphase large-scale gene-rich chromatin organization through chromatin-associated RNAs (caRNAs) in a transcription-dependent manner, and thereby maintains genomic stability. Required for the localization of the long non-coding Xist RNA on the inactive chromosome X (Xi) and the subsequent initiation and maintenance of X-linked transcriptional gene silencing during X-inactivation. Plays a role as a RNA polymerase II (Pol II) holoenzyme transcription regulator. Promotes transcription initiation by direct association with the core-TFIIH basal transcription factor complex for the assembly of a functional pre-initiation complex with Pol II in a actin-dependent manner. Blocks Pol II transcription elongation activity by inhibiting the C-terminal domain (CTD) phosphorylation of Pol II and dissociates from Pol II pre-initiation complex prior to productive transcription elongation. Positively regulates CBX5-induced transcriptional gene silencing and retention of CBX5 in the nucleus. Negatively regulates glucocorticoid-mediated transcriptional activation. Key regulator of transcription initiation and elongation in embryonic stem cells upon leukemia inhibitory factor (LIF) signaling. Involved in the long non-coding RNA H19-mediated Pol II transcriptional repression. Participates in the circadian regulation of the core clock component BMAL1 transcription. Plays a role in the regulation of telomere length. Plays a role as a global pre-mRNA alternative splicing modulator by regulating U2 small nuclear ribonucleoprotein (snRNP) biogenesis. Plays a role in mRNA stability. Component of the CRD-mediated complex that promotes MYC mRNA stabilization. Enhances the expression of specific genes, such as tumor necrosis factor TNFA, by regulating mRNA stability, possibly through binding to the 3'-untranslated region (UTR). Plays a role in mitotic cell cycle regulation. Involved in the formation of stable mitotic spindle microtubules (MTs) attachment to kinetochore, spindle organization and chromosome congression. Phosphorylation at Ser-59 by PLK1 is required for chromosome alignement and segregation and progression through mitosis. Also contributes to the targeting of AURKA to mitotic spindle MTs. Binds to double- and single-stranded DNA and RNA, poly(A), poly(C) and poly(G) oligoribonucleotides. Binds to chromatin-associated RNAs (caRNAs). Associates with chromatin to scaffold/matrix attachment region (S/MAR) elements in a chromatin-associated RNAs (caRNAs)-dependent manner. Binds to the Xist RNA. Binds the long non-coding H19 RNA. Binds to SMN1/2 pre-mRNAs at G/U-rich regions. Binds to small nuclear RNAs (snRNAs). Binds to the 3'-UTR of TNFA mRNA. Binds (via RNA-binding RGG-box region) to the long non-coding Xist RNA; this binding is direct and bridges the Xist RNA and the inactive chromosome X (Xi). Also negatively regulates embryonic stem cell differentiation upon LIF signaling. Required for embryonic development. Binds to brown fat long non-coding RNA 1 (Blnc1); facilitates the recruitment of Blnc1 by ZBTB7B required to drive brown and beige fat development and thermogenesis. (Microbial infection) Negatively regulates immunodeficiency virus type 1 (HIV-1) replication by preventing the accumulation of viral mRNA transcripts in the cytoplasm. This Homo sapiens (Human) protein is Heterogeneous nuclear ribonucleoprotein U.